The chain runs to 156 residues: tRNA (cytidine(34)-2'-O)-methyltransferase (156 aa).

Positions 102, 124, and 132 each coordinate S-adenosyl-L-methionine.

Belongs to the class IV-like SAM-binding methyltransferase superfamily. RNA methyltransferase TrmH family. TrmL subfamily. As to quaternary structure, homodimer.

The protein localises to the cytoplasm. It carries out the reaction cytidine(34) in tRNA + S-adenosyl-L-methionine = 2'-O-methylcytidine(34) in tRNA + S-adenosyl-L-homocysteine + H(+). The enzyme catalyses 5-carboxymethylaminomethyluridine(34) in tRNA(Leu) + S-adenosyl-L-methionine = 5-carboxymethylaminomethyl-2'-O-methyluridine(34) in tRNA(Leu) + S-adenosyl-L-homocysteine + H(+). Its function is as follows. Methylates the ribose at the nucleotide 34 wobble position in the two leucyl isoacceptors tRNA(Leu)(CmAA) and tRNA(Leu)(cmnm5UmAA). Catalyzes the methyl transfer from S-adenosyl-L-methionine to the 2'-OH of the wobble nucleotide. In Burkholderia cenocepacia (strain HI2424), this protein is tRNA (cytidine(34)-2'-O)-methyltransferase.